Here is a 463-residue protein sequence, read N- to C-terminus: Heterogeneous nuclear ribonucleoprotein K (463 aa).

At Met-1 the chain carries N-acetylmethionine. The tract at residues 1–37 (METEQPEETFPNTETNGEFGKRPAEDMEEEQAFKRSR) is disordered. The necessary for interaction with DDX1 stretch occupies residues 1 to 276 (METEQPEETF…GRGGRPMPPS (276 aa)). Residues 19-37 (FGKRPAEDMEEEQAFKRSR) are compositionally biased toward basic and acidic residues. N6-acetyllysine; alternate is present on Lys-34. Lys-34 participates in a covalent cross-link: Glycyl lysine isopeptide (Lys-Gly) (interchain with G-Cter in SUMO1); alternate. Lys-34 is covalently cross-linked (Glycyl lysine isopeptide (Lys-Gly) (interchain with G-Cter in SUMO2); alternate). Residues 35–197 (RSRNTDEMVE…STDRVVLIGG (163 aa)) are interaction with ASFV p30. At Ser-36 the chain carries Phosphoserine. Thr-39 carries the phosphothreonine modification. One can recognise a KH 1 domain in the interval 42–104 (MVELRILLQS…ETIGEILKKI (63 aa)). Glycyl lysine isopeptide (Lys-Gly) (interchain with G-Cter in SUMO2) cross-links involve residues Lys-52 and Lys-60. 2 consecutive repeat copies span residues 54–76 (AGAV…NASV) and 59–62 (GKGG). The interval 54 to 421 (AGAVIGKGGK…QIRHESGASI (368 aa)) is 2 X 22 AA approximate repeats. Residues 59-407 (GKGGKNIKAL…LAGSIIGKGG (349 aa)) form a 5 X 4 AA repeats of G-X-G-G region. Residues Ser-75 and Ser-116 each carry the phosphoserine modification. The KH 2 domain maps to 144-209 (DCELRLLIHQ…DRVVECIKII (66 aa)). Lys-163 is covalently cross-linked (Glycyl lysine isopeptide (Lys-Gly) (interchain with G-Cter in SUMO1); alternate). Lys-163 participates in a covalent cross-link: Glycyl lysine isopeptide (Lys-Gly) (interchain with G-Cter in SUMO2); alternate. Lys-198 bears the N6-acetyllysine mark. Residues 209-337 (ILDLISESPI…RPGDRYDGMV (129 aa)) are interaction with ZIK1. Ser-214 and Ser-216 each carry phosphoserine. Lys-219 is covalently cross-linked (Glycyl lysine isopeptide (Lys-Gly) (interchain with G-Cter in SUMO2); alternate). Lys-219 is modified (N6-succinyllysine; alternate). The tract at residues 236 to 273 (YGGFTMMFDDRRGRPVGFPMRGRGGFDRMPPGRGGRPM) is RNA-binding RGG-box. A run of 3 repeats spans residues 245 to 250 (DRRGRP), 257 to 260 (GRGG), and 267 to 270 (GRGG). Residues 245-329 (DRRGRPVGFP…LMAYDRRGRP (85 aa)) form a 2 X 6 AA approximate repeats region. A disordered region spans residues 250 to 329 (PVGFPMRGRG…LMAYDRRGRP (80 aa)). The segment covering 252–266 (GFPMRGRGGFDRMPP) has biased composition (low complexity). Residues 276–285 (SRRDYDDMSP) show a composition bias toward basic and acidic residues. Residue Ser-284 is modified to Phosphoserine. The 3-4 repeat unit spans residues 295 to 298 (GRGG). Arg-316 carries the omega-N-methylarginine modification. The stretch at 324–329 (DRRGRP) is one 2-2 repeat. An Omega-N-methylarginine modification is found at Arg-377. The residue at position 379 (Ser-379) is a Phosphoserine. Tyr-380 carries the phosphotyrosine modification. Residues 387 to 451 (IITTQVTIPK…DQIQNAQYLL (65 aa)) enclose the KH 3 domain. 2 repeat units span residues 399 to 421 (AGSI…GASI) and 404 to 407 (GKGG). Lys-405 is subject to N6-acetyllysine; alternate. Lys-405 is covalently cross-linked (Glycyl lysine isopeptide (Lys-Gly) (interchain with G-Cter in SUMO2); alternate). Ser-420 bears the Phosphoserine mark. Lys-422 participates in a covalent cross-link: Glycyl lysine isopeptide (Lys-Gly) (interchain with G-Cter in SUMO1); alternate. Residue Lys-422 forms a Glycyl lysine isopeptide (Lys-Gly) (interchain with G-Cter in SUMO2); alternate linkage. Residue Lys-422 forms a Glycyl lysine isopeptide (Lys-Gly) (interchain with G-Cter in SUMO); alternate linkage.

Identified in the spliceosome C complex. Part of a transcription inhibitory ribonucleoprotein complex composed at least of the circular RNA circZNF827, ZNF827 and HNRNPL. Interacts with RBM42 and ZIK1. Interacts with BRDT. Interacts with ANKRD28. Interacts with ASFV p30 protein. Interacts with DDX1. Interacts with MDM2; this interaction leads to ubiquitination and proteasomal degradation. Interacts with p53/TP53. Interacts with IVNS1ABP (via BACK domain); the interaction is direct. Interacts with PPIA/CYPA. As to quaternary structure, (Microbial infection) Interacts with HCV core protein. Arg-296 and Arg-299 are dimethylated, probably to asymmetric dimethylarginine. Post-translationally, sumoylated by CBX4. Sumoylation is increased upon DNA damage, such as that produced by doxorubicin, etoposide, UV light and camptothecin, due to enhanced CBX4 phosphorylation by HIPK2 under these conditions. In terms of processing, ubiquitinated by MDM2. Doxorubicin treatment does not affect monoubiquitination, but slightly decreases HNRNPK poly-ubiquitination. O-glycosylated (O-GlcNAcylated), in a cell cycle-dependent manner.

The protein resides in the cytoplasm. The protein localises to the nucleus. It localises to the nucleoplasm. Its subcellular location is the cell projection. It is found in the podosome. Functionally, one of the major pre-mRNA-binding proteins. Binds tenaciously to poly(C) sequences. Likely to play a role in the nuclear metabolism of hnRNAs, particularly for pre-mRNAs that contain cytidine-rich sequences. Can also bind poly(C) single-stranded DNA. Plays an important role in p53/TP53 response to DNA damage, acting at the level of both transcription activation and repression. When sumoylated, acts as a transcriptional coactivator of p53/TP53, playing a role in p21/CDKN1A and 14-3-3 sigma/SFN induction. As far as transcription repression is concerned, acts by interacting with long intergenic RNA p21 (lincRNA-p21), a non-coding RNA induced by p53/TP53. This interaction is necessary for the induction of apoptosis, but not cell cycle arrest. As part of a ribonucleoprotein complex composed at least of ZNF827, HNRNPL and the circular RNA circZNF827 that nucleates the complex on chromatin, may negatively regulate the transcription of genes involved in neuronal differentiation. The protein is Heterogeneous nuclear ribonucleoprotein K (HNRNPK) of Homo sapiens (Human).